The sequence spans 189 residues: MLKVGILALQGAFLEHARAVEACGALPVEIRKPGQLGDCRALIIPGGESTAIGKLMAAFDLLEPVRRFGAEGRPVFGTCAGMVLLAKDIEDSEQTRLGLMDITVRRNAFGRQVDSFEAKIHVPVLGDEPVRGVFIRAPHVTAVGPGVEILAAFEEKIILVRQDRLLAGAFHPELTADMRLHRYFLDFVD.

47-49 (GES) lines the L-glutamine pocket. Cys79 functions as the Nucleophile in the catalytic mechanism. L-glutamine contacts are provided by residues Arg106 and 135–136 (IR). Catalysis depends on charge relay system residues His171 and Glu173.

The protein belongs to the glutaminase PdxT/SNO family. As to quaternary structure, in the presence of PdxS, forms a dodecamer of heterodimers. Only shows activity in the heterodimer.

The enzyme catalyses aldehydo-D-ribose 5-phosphate + D-glyceraldehyde 3-phosphate + L-glutamine = pyridoxal 5'-phosphate + L-glutamate + phosphate + 3 H2O + H(+). It carries out the reaction L-glutamine + H2O = L-glutamate + NH4(+). Its pathway is cofactor biosynthesis; pyridoxal 5'-phosphate biosynthesis. Functionally, catalyzes the hydrolysis of glutamine to glutamate and ammonia as part of the biosynthesis of pyridoxal 5'-phosphate. The resulting ammonia molecule is channeled to the active site of PdxS. The chain is Pyridoxal 5'-phosphate synthase subunit PdxT from Desulforudis audaxviator (strain MP104C).